A 449-amino-acid polypeptide reads, in one-letter code: NADH-quinone oxidoreductase subunit H (449 aa).

9 consecutive transmembrane segments (helical) span residues 29-49 (ILLK…FAIV), 96-116 (PIFI…FAVI), 136-156 (LPVS…GLIL), 177-197 (IISY…YAGT), 211-231 (WYIV…GETN), 259-279 (FFFL…TTLF), 298-318 (WVPL…FIWL), 330-350 (FMSF…LAVA), and 365-385 (WLVG…IDPG). Over residues 393–402 (LEEAEQRKLA) the composition is skewed to basic and acidic residues. The interval 393 to 449 (LEEAEQRKLAEAPSLDRIPWPPPPQAAGRGRPAVSAGASANGSSTVIPADPGPRQER) is disordered. The segment covering 418 to 436 (AAGRGRPAVSAGASANGSS) has biased composition (low complexity).

It belongs to the complex I subunit 1 family. NDH-1 is composed of 14 different subunits. Subunits NuoA, H, J, K, L, M, N constitute the membrane sector of the complex.

The protein localises to the cell membrane. It carries out the reaction a quinone + NADH + 5 H(+)(in) = a quinol + NAD(+) + 4 H(+)(out). In terms of biological role, NDH-1 shuttles electrons from NADH, via FMN and iron-sulfur (Fe-S) centers, to quinones in the respiratory chain. The immediate electron acceptor for the enzyme in this species is believed to be ubiquinone. Couples the redox reaction to proton translocation (for every two electrons transferred, four hydrogen ions are translocated across the cytoplasmic membrane), and thus conserves the redox energy in a proton gradient. This subunit may bind ubiquinone. The protein is NADH-quinone oxidoreductase subunit H of Frankia casuarinae (strain DSM 45818 / CECT 9043 / HFP020203 / CcI3).